We begin with the raw amino-acid sequence, 221 residues long: Probable molybdenum cofactor guanylyltransferase (221 aa).

Residues leucine 17–glycine 19, lysine 29, aspartate 74, and aspartate 103 each bind GTP. Aspartate 103 contacts Mg(2+).

It belongs to the MobA family. Mg(2+) serves as cofactor.

Its subcellular location is the cytoplasm. It carries out the reaction Mo-molybdopterin + GTP + H(+) = Mo-molybdopterin guanine dinucleotide + diphosphate. Transfers a GMP moiety from GTP to Mo-molybdopterin (Mo-MPT) cofactor (Moco or molybdenum cofactor) to form Mo-molybdopterin guanine dinucleotide (Mo-MGD) cofactor. The polypeptide is Probable molybdenum cofactor guanylyltransferase (Peptoclostridium acidaminophilum (Eubacterium acidaminophilum)).